Consider the following 60-residue polypeptide: DNA-directed RNA polymerase subunit Rpo6 (60 aa).

This sequence belongs to the archaeal Rpo6/eukaryotic RPB6 RNA polymerase subunit family. As to quaternary structure, part of the RNA polymerase complex.

The protein localises to the cytoplasm. The catalysed reaction is RNA(n) + a ribonucleoside 5'-triphosphate = RNA(n+1) + diphosphate. Its function is as follows. DNA-dependent RNA polymerase (RNAP) catalyzes the transcription of DNA into RNA using the four ribonucleoside triphosphates as substrates. The chain is DNA-directed RNA polymerase subunit Rpo6 from Picrophilus torridus (strain ATCC 700027 / DSM 9790 / JCM 10055 / NBRC 100828 / KAW 2/3).